The sequence spans 326 residues: Structural protein ORF326a (326 aa).

The disordered stretch occupies residues 1–28 (MSTTFRGKKEEEEEEEEEKEEKEEELFN). Residues 11–26 (EEEEEEEEKEEKEEEL) show a composition bias toward acidic residues.

The protein localises to the virion. This Acidianus two-tailed virus (ATV) protein is Structural protein ORF326a.